Here is a 106-residue protein sequence, read N- to C-terminus: Movement protein TGB2 (106 aa).

At Met1–Asp8 the chain is on the cytoplasmic side. Residues Tyr9–Ile29 form a helical membrane-spanning segment. Topologically, residues Thr30–Arg73 are lumenal. Residues Trp74–Arg94 traverse the membrane as a helical segment. Over Gln95–His106 the chain is Cytoplasmic.

It belongs to the Tymovirales TGBp2 protein family.

It localises to the host endoplasmic reticulum membrane. Plays a role in viral cell-to-cell propagation, by facilitating genome transport to neighboring plant cells through plasmosdesmata,. In Lilium (LSV), this protein is Movement protein TGB2.